The chain runs to 329 residues: ADP-L-glycero-D-manno-heptose-6-epimerase (329 aa).

NADP(+) contacts are provided by residues 10-11, 31-32, Lys-38, Lys-53, 74-78, and Asn-91; these read FI, DD, and QGACS. Tyr-138 acts as the Proton acceptor in catalysis. An NADP(+)-binding site is contributed by Lys-142. Position 167 (Asn-167) interacts with substrate. NADP(+)-binding residues include Val-168 and Lys-176. Catalysis depends on Lys-176, which acts as the Proton acceptor. Substrate contacts are provided by residues Arg-178, His-185, 199 to 202, Arg-212, and Tyr-291; that span reads FAGW.

It belongs to the NAD(P)-dependent epimerase/dehydratase family. HldD subfamily. In terms of assembly, homopentamer. It depends on NADP(+) as a cofactor.

It carries out the reaction ADP-D-glycero-beta-D-manno-heptose = ADP-L-glycero-beta-D-manno-heptose. It participates in nucleotide-sugar biosynthesis; ADP-L-glycero-beta-D-manno-heptose biosynthesis; ADP-L-glycero-beta-D-manno-heptose from D-glycero-beta-D-manno-heptose 7-phosphate: step 4/4. The protein operates within bacterial outer membrane biogenesis; LPS core biosynthesis. Its function is as follows. Catalyzes the interconversion between ADP-D-glycero-beta-D-manno-heptose and ADP-L-glycero-beta-D-manno-heptose via an epimerization at carbon 6 of the heptose. This Bordetella pertussis (strain Tohama I / ATCC BAA-589 / NCTC 13251) protein is ADP-L-glycero-D-manno-heptose-6-epimerase.